Reading from the N-terminus, the 115-residue chain is uncharacterized protein (115 aa).

This is an uncharacterized protein from Schizosaccharomyces pombe (strain 972 / ATCC 24843) (Fission yeast).